We begin with the raw amino-acid sequence, 436 residues long: Nicotinate phosphoribosyltransferase (436 aa).

A Phosphohistidine; by autocatalysis modification is found at His231.

This sequence belongs to the NAPRTase family. Post-translationally, transiently phosphorylated on a His residue during the reaction cycle. Phosphorylation strongly increases the affinity for substrates and increases the rate of nicotinate D-ribonucleotide production. Dephosphorylation regenerates the low-affinity form of the enzyme, leading to product release.

The catalysed reaction is nicotinate + 5-phospho-alpha-D-ribose 1-diphosphate + ATP + H2O = nicotinate beta-D-ribonucleotide + ADP + phosphate + diphosphate. Its pathway is cofactor biosynthesis; NAD(+) biosynthesis; nicotinate D-ribonucleotide from nicotinate: step 1/1. Catalyzes the synthesis of beta-nicotinate D-ribonucleotide from nicotinate and 5-phospho-D-ribose 1-phosphate at the expense of ATP. This is Nicotinate phosphoribosyltransferase from Vibrio campbellii (strain ATCC BAA-1116).